A 268-amino-acid chain; its full sequence is Nickel import ATP-binding protein NikE (268 aa).

Residues 4–252 (LNVSGLSHHY…SSDAGRVLQN (249 aa)) form the ABC transporter domain. Residue 45-52 (GRSGCGKS) participates in ATP binding.

This sequence belongs to the ABC transporter superfamily. Nickel importer (TC 3.A.1.5.3) family. As to quaternary structure, the complex is composed of two ATP-binding proteins (NikD and NikE), two transmembrane proteins (NikB and NikC) and a solute-binding protein (NikA).

It is found in the cell inner membrane. The enzyme catalyses Ni(2+)(out) + ATP + H2O = Ni(2+)(in) + ADP + phosphate + H(+). In terms of biological role, part of the ABC transporter complex NikABCDE involved in nickel import. Responsible for energy coupling to the transport system. This Shigella boydii serotype 4 (strain Sb227) protein is Nickel import ATP-binding protein NikE.